The chain runs to 205 residues: MKIANTFIKRGAAGGLDLSQAPGVTLTLAERRRSRQRLDLDEGRGELGMAIERGQTLRDGDVLVAEDGTYVVVRAALEDVARVTAATPWQLARAAYHLGNRHVLLEIAEQHLQFEYDAVLIDMLAQLGGVTAMRLRAVFEPDVGAYGGGHRHGHDESFGDDYALAQAAYHAHEAHPHAHSHAGGHGHVHSGHGHGGKHGEHDAES.

A disordered region spans residues alanine 171 to serine 205. The span at histidine 177–glycine 196 shows a compositional bias: basic residues.

It belongs to the UreE family.

It localises to the cytoplasm. Its function is as follows. Involved in urease metallocenter assembly. Binds nickel. Probably functions as a nickel donor during metallocenter assembly. The chain is Urease accessory protein UreE from Bordetella parapertussis (strain 12822 / ATCC BAA-587 / NCTC 13253).